Reading from the N-terminus, the 452-residue chain is Bifunctional protein GlmU (452 aa).

Residues 1-226 form a pyrophosphorylase region; sequence MNFSAVILAA…PIEVEGVNDR (226 aa). Residues 8 to 11, Lys-22, Gln-73, 78 to 79, 100 to 102, Gly-137, Glu-151, Asn-166, and Asn-224 contribute to the UDP-N-acetyl-alpha-D-glucosamine site; these read LAAG, GT, and YGD. Asp-102 serves as a coordination point for Mg(2+). Mg(2+) is bound at residue Asn-224. Positions 227-247 are linker; that stretch reads AQLARLERAYQAAQAQKLLEQ. Positions 248–452 are N-acetyltransferase; it reads GVMLRDPSRF…IANWQRPTKK (205 aa). UDP-N-acetyl-alpha-D-glucosamine-binding residues include Arg-330 and Lys-348. His-360 (proton acceptor) is an active-site residue. Positions 363 and 374 each coordinate UDP-N-acetyl-alpha-D-glucosamine. Acetyl-CoA-binding positions include Ala-377, 383–384, Ser-402, Ala-420, and Arg-437; that span reads NY.

This sequence in the N-terminal section; belongs to the N-acetylglucosamine-1-phosphate uridyltransferase family. It in the C-terminal section; belongs to the transferase hexapeptide repeat family. In terms of assembly, homotrimer. Mg(2+) is required as a cofactor.

It localises to the cytoplasm. It carries out the reaction alpha-D-glucosamine 1-phosphate + acetyl-CoA = N-acetyl-alpha-D-glucosamine 1-phosphate + CoA + H(+). The catalysed reaction is N-acetyl-alpha-D-glucosamine 1-phosphate + UTP + H(+) = UDP-N-acetyl-alpha-D-glucosamine + diphosphate. The protein operates within nucleotide-sugar biosynthesis; UDP-N-acetyl-alpha-D-glucosamine biosynthesis; N-acetyl-alpha-D-glucosamine 1-phosphate from alpha-D-glucosamine 6-phosphate (route II): step 2/2. Its pathway is nucleotide-sugar biosynthesis; UDP-N-acetyl-alpha-D-glucosamine biosynthesis; UDP-N-acetyl-alpha-D-glucosamine from N-acetyl-alpha-D-glucosamine 1-phosphate: step 1/1. It functions in the pathway bacterial outer membrane biogenesis; LPS lipid A biosynthesis. Its function is as follows. Catalyzes the last two sequential reactions in the de novo biosynthetic pathway for UDP-N-acetylglucosamine (UDP-GlcNAc). The C-terminal domain catalyzes the transfer of acetyl group from acetyl coenzyme A to glucosamine-1-phosphate (GlcN-1-P) to produce N-acetylglucosamine-1-phosphate (GlcNAc-1-P), which is converted into UDP-GlcNAc by the transfer of uridine 5-monophosphate (from uridine 5-triphosphate), a reaction catalyzed by the N-terminal domain. The sequence is that of Bifunctional protein GlmU from Aliivibrio fischeri (strain MJ11) (Vibrio fischeri).